The chain runs to 368 residues: Phosphoserine aminotransferase (368 aa).

Residue Arg42 coordinates L-glutamate. Residues 76 to 77, Trp102, Thr152, Asp179, and Gln202 each bind pyridoxal 5'-phosphate; that span reads AS. N6-(pyridoxal phosphate)lysine is present on Lys203. 245–246 contacts pyridoxal 5'-phosphate; that stretch reads NT.

Belongs to the class-V pyridoxal-phosphate-dependent aminotransferase family. SerC subfamily. As to quaternary structure, homodimer. Pyridoxal 5'-phosphate serves as cofactor.

The protein resides in the cytoplasm. The enzyme catalyses O-phospho-L-serine + 2-oxoglutarate = 3-phosphooxypyruvate + L-glutamate. It catalyses the reaction 4-(phosphooxy)-L-threonine + 2-oxoglutarate = (R)-3-hydroxy-2-oxo-4-phosphooxybutanoate + L-glutamate. It functions in the pathway amino-acid biosynthesis; L-serine biosynthesis; L-serine from 3-phospho-D-glycerate: step 2/3. The protein operates within cofactor biosynthesis; pyridoxine 5'-phosphate biosynthesis; pyridoxine 5'-phosphate from D-erythrose 4-phosphate: step 3/5. In terms of biological role, catalyzes the reversible conversion of 3-phosphohydroxypyruvate to phosphoserine and of 3-hydroxy-2-oxo-4-phosphonooxybutanoate to phosphohydroxythreonine. This Nitrosomonas europaea (strain ATCC 19718 / CIP 103999 / KCTC 2705 / NBRC 14298) protein is Phosphoserine aminotransferase.